A 164-amino-acid chain; its full sequence is Lipoprotein signal peptidase (164 aa).

2 helical membrane passes run 68–88 (TILV…LWNA) and 96–116 (FWGL…RAMF). Residues D121 and D139 contribute to the active site. Residues 134 to 154 (TFNVADSAIVVGSCLLLIDLL) form a helical membrane-spanning segment.

The protein belongs to the peptidase A8 family.

It localises to the cell inner membrane. The catalysed reaction is Release of signal peptides from bacterial membrane prolipoproteins. Hydrolyzes -Xaa-Yaa-Zaa-|-(S,diacylglyceryl)Cys-, in which Xaa is hydrophobic (preferably Leu), and Yaa (Ala or Ser) and Zaa (Gly or Ala) have small, neutral side chains.. It participates in protein modification; lipoprotein biosynthesis (signal peptide cleavage). In terms of biological role, this protein specifically catalyzes the removal of signal peptides from prolipoproteins. The sequence is that of Lipoprotein signal peptidase from Solibacter usitatus (strain Ellin6076).